A 112-amino-acid chain; its full sequence is Ciliary microtubule inner protein 3 (112 aa).

Positions 1–34 (MCKDSQKPSVPSHGPKTPSCKGVKAPHSSRPRAW) are disordered.

The protein belongs to the CIMIP3-like family.

The protein resides in the cytoplasm. Its subcellular location is the cytoskeleton. The protein localises to the flagellum axoneme. This is Ciliary microtubule inner protein 3 from Homo sapiens (Human).